The primary structure comprises 273 residues: Polyamine aminopropyltransferase (273 aa).

The 234-residue stretch at 5–238 folds into the PABS domain; that stretch reads ENWFSERYSD…GFWSFTVASP (234 aa). Gln-34 is a binding site for S-methyl-5'-thioadenosine. Positions 65 and 90 each coordinate spermidine. S-methyl-5'-thioadenosine is bound by residues Glu-109 and 140-141; that span reads DG. Residue Asp-158 is the Proton acceptor of the active site. 158 to 161 provides a ligand contact to spermidine; sequence DSTD. Pro-165 contributes to the S-methyl-5'-thioadenosine binding site.

Belongs to the spermidine/spermine synthase family. Homodimer or homotetramer.

It is found in the cytoplasm. The catalysed reaction is S-adenosyl 3-(methylsulfanyl)propylamine + putrescine = S-methyl-5'-thioadenosine + spermidine + H(+). It participates in amine and polyamine biosynthesis; spermidine biosynthesis; spermidine from putrescine: step 1/1. Its function is as follows. Catalyzes the irreversible transfer of a propylamine group from the amino donor S-adenosylmethioninamine (decarboxy-AdoMet) to putrescine (1,4-diaminobutane) to yield spermidine. In Thermoplasma acidophilum (strain ATCC 25905 / DSM 1728 / JCM 9062 / NBRC 15155 / AMRC-C165), this protein is Polyamine aminopropyltransferase.